A 562-amino-acid polypeptide reads, in one-letter code: uncharacterized protein (562 aa).

5 helical membrane passes run I10 to G27, F34 to D53, I63 to A85, A92 to G114, and F155 to L177. 2 consecutive RCK C-terminal domains span residues T204–S288 and D290–V377. A run of 6 helical transmembrane segments spans residues V387–V404, G408–V430, P443–G465, L475–V497, F504–I526, and Y539–L561.

It belongs to the AAE transporter (TC 2.A.81) family.

The protein resides in the cell membrane. This is an uncharacterized protein from Shewanella oneidensis (strain ATCC 700550 / JCM 31522 / CIP 106686 / LMG 19005 / NCIMB 14063 / MR-1).